A 711-amino-acid chain; its full sequence is Polyribonucleotide nucleotidyltransferase (711 aa).

2 residues coordinate Mg(2+): aspartate 486 and aspartate 492. The 60-residue stretch at 553–612 (PRIHTIKINPDKIKDVIGKGGSVIRALTEETGTTIEIEDDGTVKIAATDGEKAKHAIRRI) folds into the KH domain. One can recognise an S1 motif domain in the interval 622 to 690 (GRVYTGKVTR…RQGRIRLSIK (69 aa)). A disordered region spans residues 689–711 (IKEATEQSQPAAAPEAPAAEQGE). Low complexity predominate over residues 694-711 (EQSQPAAAPEAPAAEQGE).

It belongs to the polyribonucleotide nucleotidyltransferase family. Component of the RNA degradosome, which is a multiprotein complex involved in RNA processing and mRNA degradation. Mg(2+) serves as cofactor.

It is found in the cytoplasm. It catalyses the reaction RNA(n+1) + phosphate = RNA(n) + a ribonucleoside 5'-diphosphate. Involved in mRNA degradation. Catalyzes the phosphorolysis of single-stranded polyribonucleotides processively in the 3'- to 5'-direction. The chain is Polyribonucleotide nucleotidyltransferase from Escherichia coli (strain ATCC 8739 / DSM 1576 / NBRC 3972 / NCIMB 8545 / WDCM 00012 / Crooks).